We begin with the raw amino-acid sequence, 590 residues long: MQNNSVQQANISIMSSFSGSKKVYVEGSSSDIQVPMREIALSPTTGSFGEEENAPVRVYDTSGPYTDPEVTINIQEGLKPLRQKWITERGDVEEYEGRAIKPEDNGYKKAKPNVSYPGLKRKPLRAKAGQNVTQMHYAKKGIITPEMEFIAIREHVSPEFVRDEVASGRAIIPSNINHPESEPMIIGRNFHVKINANIGNSAVTSSIEEEVEKMTWAIRWGADTMMDLSTGKDIHTTREWIIRNCPVPVGTVPIYQALEKVNGVAEDLTWEIYRDTLIEQAEQGVDYFTIHAGVLLRYVPLTAKRTTGIVSRGGAIMAQWCLAHHQESFLYTHFEEICEIMKMYDIAFSLGDGLRPGSIADANDEAQFAELETLGELTQIAWKHDVQVMIEGPGHVPMHKIKENVDKQMDICKEAPFYTLGPLTTDIAPGYDHITSAIGAAMIGWYGTAMLCYVTPKEHLGLPNRDDVREGVITYKIAAHAADLAKGHPGAQIRDDALSKARFEFRWRDQFNLSLDPERALEYHDETLPAEGAKTAHFCSMCGPKFCSMRISQDIRDYAKKNDLSEAEAINKGLKEKAKEFVDTGSNLYQ.

Substrate contacts are provided by residues N197, M226, Y255, H291, 311–313 (SRG), 352–355 (DGLR), and E391. H395 lines the Zn(2+) pocket. Y418 contributes to the substrate binding site. A Zn(2+)-binding site is contributed by H459. Residues C539, C542, and C547 each contribute to the [4Fe-4S] cluster site.

It belongs to the ThiC family. [4Fe-4S] cluster is required as a cofactor.

It carries out the reaction 5-amino-1-(5-phospho-beta-D-ribosyl)imidazole + S-adenosyl-L-methionine = 4-amino-2-methyl-5-(phosphooxymethyl)pyrimidine + CO + 5'-deoxyadenosine + formate + L-methionine + 3 H(+). The protein operates within cofactor biosynthesis; thiamine diphosphate biosynthesis. Functionally, catalyzes the synthesis of the hydroxymethylpyrimidine phosphate (HMP-P) moiety of thiamine from aminoimidazole ribotide (AIR) in a radical S-adenosyl-L-methionine (SAM)-dependent reaction. This is Phosphomethylpyrimidine synthase from Bacillus subtilis (strain 168).